Consider the following 89-residue polypeptide: Small ribosomal subunit protein uS14 (89 aa).

The protein belongs to the universal ribosomal protein uS14 family. In terms of assembly, part of the 30S ribosomal subunit. Contacts proteins S3 and S10.

Its function is as follows. Binds 16S rRNA, required for the assembly of 30S particles and may also be responsible for determining the conformation of the 16S rRNA at the A site. The sequence is that of Small ribosomal subunit protein uS14 from Chlorobium phaeobacteroides (strain BS1).